The sequence spans 244 residues: Small ribosomal subunit protein uS3 (244 aa).

A KH type-2 domain is found at V39 to R107. Residues V213–R244 are disordered. A compositionally biased stretch (basic and acidic residues) spans E216 to R244.

Belongs to the universal ribosomal protein uS3 family. Part of the 30S ribosomal subunit. Forms a tight complex with proteins S10 and S14.

Its function is as follows. Binds the lower part of the 30S subunit head. Binds mRNA in the 70S ribosome, positioning it for translation. The polypeptide is Small ribosomal subunit protein uS3 (Xanthomonas euvesicatoria pv. vesicatoria (strain 85-10) (Xanthomonas campestris pv. vesicatoria)).